The following is a 218-amino-acid chain: uncharacterized protein (218 aa).

Transmembrane regions (helical) follow at residues 14–34 (CLLS…YFTS) and 175–195 (LIIP…LALV).

It to H.pylori HP0270.

The protein resides in the cell membrane. This is an uncharacterized protein from Rickettsia prowazekii (strain Madrid E).